A 576-amino-acid chain; its full sequence is Polypeptide N-acetylgalactosaminyltransferase 12 (576 aa).

Residues 1–19 lie on the Cytoplasmic side of the membrane; it reads MWGRAVRRRCPRGLRRGRE. A helical; Signal-anchor for type II membrane protein transmembrane segment spans residues 20–37; that stretch reads ALLALLALAGLGALLRAR. The segment at 38-58 is disordered; the sequence is SRSGTVDPGPPRTPLPGRHEP. Over 38 to 576 the chain is Lumenal; it reads SRSGTVDPGP…QRWFFKERMS (539 aa). Cystine bridges form between Cys-120–Cys-353, Cys-344–Cys-417, Cys-453–Cys-474, Cys-501–Cys-516, and Cys-542–Cys-561. The segment at 130–239 is catalytic subdomain A; the sequence is LPKTSVVIAF…EGWLEPLLQR (110 aa). Residues Asp-171 and Arg-200 each contribute to the substrate site. The Mn(2+) site is built by Asp-223 and His-225. Positions 299–361 are catalytic subdomain B; it reads VIRSPTMAGG…PCSHVGHVFP (63 aa). Trp-330 provides a ligand contact to substrate. His-358 contacts Mn(2+). Tyr-366 contacts substrate. Residues 440-572 form the Ricin B-type lectin domain; that stretch reads FFGMLQNRGL…NSDNQRWFFK (133 aa).

The protein belongs to the glycosyltransferase 2 family. GalNAc-T subfamily. Requires Mn(2+) as cofactor.

It is found in the golgi apparatus membrane. It carries out the reaction L-seryl-[protein] + UDP-N-acetyl-alpha-D-galactosamine = a 3-O-[N-acetyl-alpha-D-galactosaminyl]-L-seryl-[protein] + UDP + H(+). The catalysed reaction is L-threonyl-[protein] + UDP-N-acetyl-alpha-D-galactosamine = a 3-O-[N-acetyl-alpha-D-galactosaminyl]-L-threonyl-[protein] + UDP + H(+). The protein operates within protein modification; protein glycosylation. Its function is as follows. Catalyzes the initial reaction in O-linked oligosaccharide biosynthesis, the transfer of an N-acetyl-D-galactosamine residue to a serine or threonine residue on the protein receptor. Has activity toward non-glycosylated peptides such as Muc5AC, Muc1a and EA2, and no detectable activity with Muc2 and Muc7. Displays enzymatic activity toward the Gal-NAc-Muc5AC glycopeptide, but no detectable activity to mono-GalNAc-glycosylated Muc1a, Muc2, Muc7 and EA2. May play an important role in the initial step of mucin-type oligosaccharide biosynthesis in digestive organs. The polypeptide is Polypeptide N-acetylgalactosaminyltransferase 12 (Galnt12) (Mus musculus (Mouse)).